Consider the following 95-residue polypeptide: Co-chaperonin GroES (95 aa).

It belongs to the GroES chaperonin family. In terms of assembly, heptamer of 7 subunits arranged in a ring. Interacts with the chaperonin GroEL.

The protein resides in the cytoplasm. Together with the chaperonin GroEL, plays an essential role in assisting protein folding. The GroEL-GroES system forms a nano-cage that allows encapsulation of the non-native substrate proteins and provides a physical environment optimized to promote and accelerate protein folding. GroES binds to the apical surface of the GroEL ring, thereby capping the opening of the GroEL channel. In Stenotrophomonas maltophilia (strain R551-3), this protein is Co-chaperonin GroES.